The sequence spans 100 residues: Large ribosomal subunit protein uL23 (100 aa).

It belongs to the universal ribosomal protein uL23 family. As to quaternary structure, part of the 50S ribosomal subunit. Contacts protein L29, and trigger factor when it is bound to the ribosome.

Its function is as follows. One of the early assembly proteins it binds 23S rRNA. One of the proteins that surrounds the polypeptide exit tunnel on the outside of the ribosome. Forms the main docking site for trigger factor binding to the ribosome. This is Large ribosomal subunit protein uL23 from Prochlorococcus marinus (strain MIT 9301).